Here is a 513-residue protein sequence, read N- to C-terminus: MQLNSTEISDLIKQRIEQFEVVSEARNEGTIVAVSDGIIRINGLADVMQGEMIELPGNRYAIALNLERDSVGAVVMGSYAGLAEGVKVKTTGRILEVPVGRGLLGRVLNTLGEPIDGKGPVDNDGYSPIEVIAPGVIERQSVDEPVQTGYKTVDSMIPIGRGQRELVIGDRQTGKTALAIDAIINQKESGIKCVYVAIGQKASTIANVVRKLEEHGALANTIVVVATASEAAALQYLAPYSGCSMGEYFRDRGEDALIVYDDLSKQAVAYRQISLLLKRPPGREAYPGDVFYLHSRLLERASRVNANYVEKFTKGAVTGKTGSLTALPIIETQAGDVSAFVPTNVISITDGQIFLETDLFNSGLRPAVNPGISVSRVGGAAQTKIIKKLSGGIRTALAQYRELAAFSQFASDLDDATRAQLEHGERVTELMKQKQYAPMSVAAQAVVIYAAEKGYLKSVALNKVGHFEAALLSFMNSEYAALMTNINATGDYNADIEGEIKAALDKFVATQTW.

ATP is bound at residue 169–176 (GDRQTGKT).

The protein belongs to the ATPase alpha/beta chains family. F-type ATPases have 2 components, CF(1) - the catalytic core - and CF(0) - the membrane proton channel. CF(1) has five subunits: alpha(3), beta(3), gamma(1), delta(1), epsilon(1). CF(0) has three main subunits: a(1), b(2) and c(9-12). The alpha and beta chains form an alternating ring which encloses part of the gamma chain. CF(1) is attached to CF(0) by a central stalk formed by the gamma and epsilon chains, while a peripheral stalk is formed by the delta and b chains.

The protein resides in the cell inner membrane. The enzyme catalyses ATP + H2O + 4 H(+)(in) = ADP + phosphate + 5 H(+)(out). Produces ATP from ADP in the presence of a proton gradient across the membrane. The alpha chain is a regulatory subunit. The sequence is that of ATP synthase subunit alpha from Shewanella denitrificans (strain OS217 / ATCC BAA-1090 / DSM 15013).